A 72-amino-acid polypeptide reads, in one-letter code: Large ribosomal subunit protein bL32 (72 aa).

Belongs to the bacterial ribosomal protein bL32 family.

The polypeptide is Large ribosomal subunit protein bL32 (Dehalococcoides mccartyi (strain ATCC BAA-2100 / JCM 16839 / KCTC 5957 / BAV1)).